A 174-amino-acid chain; its full sequence is Endoribonuclease YbeY (174 aa).

Zn(2+) contacts are provided by His133, His137, and His143.

The protein belongs to the endoribonuclease YbeY family. Requires Zn(2+) as cofactor.

It is found in the cytoplasm. Its function is as follows. Single strand-specific metallo-endoribonuclease involved in late-stage 70S ribosome quality control and in maturation of the 3' terminus of the 16S rRNA. The polypeptide is Endoribonuclease YbeY (Paracoccus denitrificans (strain Pd 1222)).